Reading from the N-terminus, the 176-residue chain is RING-H2 finger protein ATL73 (176 aa).

Positions 1 to 16 (MARFLLATQATPTISA) are cleaved as a signal peptide. The chain crosses the membrane as a helical span at residues 42-62 (VIILAALLCALICALGINSVL). The RING-type; atypical zinc finger occupies 113–155 (CLICLGDFVEGETVRVLPKCNHGFHVKCIDTWLLSHSSCPTCR).

This sequence belongs to the RING-type zinc finger family. ATL subfamily.

The protein resides in the membrane. It catalyses the reaction S-ubiquitinyl-[E2 ubiquitin-conjugating enzyme]-L-cysteine + [acceptor protein]-L-lysine = [E2 ubiquitin-conjugating enzyme]-L-cysteine + N(6)-ubiquitinyl-[acceptor protein]-L-lysine.. It participates in protein modification; protein ubiquitination. The protein is RING-H2 finger protein ATL73 (ATL73) of Arabidopsis thaliana (Mouse-ear cress).